Reading from the N-terminus, the 214-residue chain is Ribonuclease T (214 aa).

Positions 20–195 (VVVDVETAGF…YDTQQTAELF (176 aa)) constitute an Exonuclease domain. Residues aspartate 23, glutamate 25, histidine 182, and aspartate 187 each contribute to the Mg(2+) site. Histidine 182 (proton donor/acceptor) is an active-site residue.

Belongs to the RNase T family. In terms of assembly, homodimer. Mg(2+) serves as cofactor.

Its function is as follows. Trims short 3' overhangs of a variety of RNA species, leaving a one or two nucleotide 3' overhang. Responsible for the end-turnover of tRNA: specifically removes the terminal AMP residue from uncharged tRNA (tRNA-C-C-A). Also appears to be involved in tRNA biosynthesis. This Vibrio campbellii (strain ATCC BAA-1116) protein is Ribonuclease T.